The primary structure comprises 176 residues: MAASTDIAGLEESFRKFAIHGDPKASGQEMNGKNWAKLCKDCKVADGKAVTGTDVDIVFSKVKAKSARVINYEEFKKALEELATKRFKGKTKEEAFDAICQLIAGKEPANIGVTKAKTGGAVDRLTDTSKYTGSHKERFDESGKGKGIAGRQDILDDSGYVSAYKNAGTYDAKVKK.

Ala2 carries the post-translational modification N-acetylalanine.

This sequence belongs to the TPPP family.

It localises to the cytoplasm. The protein resides in the cytoskeleton. In terms of biological role, regulator of microtubule dynamic that has microtubule bundling activity. Required for embryo implantation; possibly by regulating beta-catenin. Also required for decidualization via regulation of beta-catenin. The chain is Tubulin polymerization-promoting protein family member 3 (Tppp3) from Rattus norvegicus (Rat).